Reading from the N-terminus, the 242-residue chain is MNTEKPSVAHNVDHNEIAKFEAVASRWWDLEGEFKPLHRINPLRLGYITERSGGLFGKKVLDVGCGGGILAESMAREGATVTGLDMGFEPLQVAKLHALESGIEVEYVQETVEEHAAKHAQQYDVVTCMEMLEHVPDPQSVVHACAQLVKPGGEVFFSTLNRNGKSWLMAVVGAEYILRMVPKGTHDVKKFIKPAELLSWVDETVLKEQHITGLHYNPITNTFKLGPGVDVNYMLHTRAKKA.

Positions 44, 64, 85, and 129 each coordinate S-adenosyl-L-methionine.

The protein belongs to the methyltransferase superfamily. UbiG/COQ3 family.

The enzyme catalyses a 3-demethylubiquinol + S-adenosyl-L-methionine = a ubiquinol + S-adenosyl-L-homocysteine + H(+). It carries out the reaction a 3-(all-trans-polyprenyl)benzene-1,2-diol + S-adenosyl-L-methionine = a 2-methoxy-6-(all-trans-polyprenyl)phenol + S-adenosyl-L-homocysteine + H(+). Its pathway is cofactor biosynthesis; ubiquinone biosynthesis. Functionally, O-methyltransferase that catalyzes the 2 O-methylation steps in the ubiquinone biosynthetic pathway. The protein is Ubiquinone biosynthesis O-methyltransferase of Salmonella agona (strain SL483).